A 155-amino-acid polypeptide reads, in one-letter code: Ribosomal RNA large subunit methyltransferase H (155 aa).

S-adenosyl-L-methionine contacts are provided by residues Ile71, Gly103, and 122 to 127; that span reads FGRMVW.

Belongs to the RNA methyltransferase RlmH family. As to quaternary structure, homodimer.

It is found in the cytoplasm. It carries out the reaction pseudouridine(1915) in 23S rRNA + S-adenosyl-L-methionine = N(3)-methylpseudouridine(1915) in 23S rRNA + S-adenosyl-L-homocysteine + H(+). In terms of biological role, specifically methylates the pseudouridine at position 1915 (m3Psi1915) in 23S rRNA. This chain is Ribosomal RNA large subunit methyltransferase H, found in Cereibacter sphaeroides (strain ATCC 17025 / ATH 2.4.3) (Rhodobacter sphaeroides).